A 324-amino-acid polypeptide reads, in one-letter code: COP9 signalosome complex subunit 6 (324 aa).

Residues 38-171 (VALHPLVILN…VSVFESVIDI (134 aa)) form the MPN domain.

Belongs to the peptidase M67A family. CSN6 subfamily. In terms of assembly, component of the CSN complex, composed of COPS1/GPS1, COPS2, COPS3, COPS4, COPS5, COPS6, COPS7 (COPS7A or COPS7B), COPS8 and COPS9. In the complex, it probably interacts directly with COPS2, COPS4, COPS5, COPS7 (COPS7A or COPS7B) and COPS9. Interacts with the translation initiation factor EIF3S6. Interacts weakly with RBX1. Directly interacts with COP1 and 14-3-3 protein sigma/SFN. Interacts with ERCC6.

It is found in the cytoplasm. Its subcellular location is the nucleus. Functionally, component of the COP9 signalosome complex (CSN), a complex involved in various cellular and developmental processes. The CSN complex is an essential regulator of the ubiquitin (Ubl) conjugation pathway by mediating the deneddylation of the cullin subunits of SCF-type E3 ligase complexes, leading to decrease the Ubl ligase activity of SCF-type complexes such as SCF, CSA or DDB2. The complex is also involved in phosphorylation of p53/TP53, c-jun/JUN, IkappaBalpha/NFKBIA, ITPK1 and IRF8, possibly via its association with CK2 and PKD kinases. CSN-dependent phosphorylation of TP53 and JUN promotes and protects degradation by the Ubl system, respectively. Has some glucocorticoid receptor-responsive activity. Stabilizes COP1 through reducing COP1 auto-ubiquitination and decelerating COP1 turnover rate, hence regulates the ubiquitination of COP1 targets, including SFN. The sequence is that of COP9 signalosome complex subunit 6 (Cops6) from Mus musculus (Mouse).